The following is an 867-amino-acid chain: Valine--tRNA ligase (867 aa).

The 'HIGH' region motif lies at 42 to 52 (PNITGKIHMGH). The 'KMSKS' region motif lies at 521 to 525 (KMSKS). Lysine 524 provides a ligand contact to ATP. Residues 794 to 867 (LGTLIDVKSE…QIISDLEAKA (74 aa)) adopt a coiled-coil conformation.

It belongs to the class-I aminoacyl-tRNA synthetase family. ValS type 1 subfamily. Monomer.

The protein resides in the cytoplasm. The enzyme catalyses tRNA(Val) + L-valine + ATP = L-valyl-tRNA(Val) + AMP + diphosphate. Functionally, catalyzes the attachment of valine to tRNA(Val). As ValRS can inadvertently accommodate and process structurally similar amino acids such as threonine, to avoid such errors, it has a 'posttransfer' editing activity that hydrolyzes mischarged Thr-tRNA(Val) in a tRNA-dependent manner. In Fervidobacterium nodosum (strain ATCC 35602 / DSM 5306 / Rt17-B1), this protein is Valine--tRNA ligase.